We begin with the raw amino-acid sequence, 704 residues long: Neutral ceramidase (704 aa).

Residues 1-23 (MANSKMAFLAFLAVSFLCGLVSA) form the signal peptide. The N-linked (GlcNAc...) asparagine glycan is linked to N230. S276 functions as the Nucleophile in the catalytic mechanism. Residues N362, N550, and N598 are each glycosylated (N-linked (GlcNAc...) asparagine).

It belongs to the neutral ceramidase family. Post-translationally, N-glycosylated. As to expression, widely expressed in different tissues but enriched in neurons at all stages of development.

The protein resides in the secreted. The catalysed reaction is an N-acylsphing-4-enine + H2O = sphing-4-enine + a fatty acid. Hydrolyzes the sphingolipid ceramide into sphingosine and free fatty acid at an optimal pH of 6.5-7.5. Acts as a key regulator of sphingolipid signaling metabolites by generating sphingosine at the cell surface. Regulates synaptic vesicle exocytosis and trafficking by controlling presynaptic terminal sphingolipid composition. This Drosophila melanogaster (Fruit fly) protein is Neutral ceramidase (CDase).